Reading from the N-terminus, the 419-residue chain is Zinc finger protein Pegasus (419 aa).

3 C2H2-type zinc fingers span residues 79–101, 107–129, and 135–158; these read LKCR…IRIH, HRCH…MRSH, and YKCE…RRRH. Disordered stretches follow at residues 203–255 and 310–360; these read LQKP…DQDM and SVNT…TPVQ. Positions 208–228 are enriched in basic and acidic residues; the sequence is SEQHHLGDFTHDLPPHAHLHQ. Composition is skewed to polar residues over residues 310 to 320 and 341 to 360; these read SVNTAQASSPI and ERTS…TPVQ. 2 C2H2-type zinc fingers span residues 366–388 and 394–418; these read HHCP…MGCH and FQCN…RGQH.

The protein belongs to the Ikaros C2H2-type zinc-finger protein family. Probably self-associates.

The protein resides in the nucleus. In terms of biological role, transcriptional repressor that binds the core 5'GNNTGTNG-3' DNA consensus sequence. This chain is Zinc finger protein Pegasus (ikzf5), found in Danio rerio (Zebrafish).